Here is a 240-residue protein sequence, read N- to C-terminus: Putative tyrosine phosphatase 067L (240 aa).

The region spanning 3 to 151 (QASFFVADKA…EREWPLNPTQ (149 aa)) is the Tyrosine-protein phosphatase domain. Catalysis depends on C96, which acts as the Phosphocysteine intermediate.

The protein belongs to the protein-tyrosine phosphatase family.

It carries out the reaction O-phospho-L-tyrosyl-[protein] + H2O = L-tyrosyl-[protein] + phosphate. The sequence is that of Putative tyrosine phosphatase 067L from Aedes vexans (Inland floodwater mosquito).